The following is a 160-amino-acid chain: MNRMSTIFLKIALVLIGIPILALCIFLVPKVANYSAELFPNIAYIKYLVFIYLYVTAIPFYFALYQAFKLLSYIDKNKAFSGLSVRALKNIKYCAVTISIFYAAGMPVFYLMAEIDDAPGIIVIGLVIIFASMVIAVFAAVLQKLLKEAIDIKSENDLTV.

Transmembrane regions (helical) follow at residues 7–27 (IFLK…CIFL), 48–68 (LVFI…YQAF), 95–115 (AVTI…MAEI), and 121–141 (IIVI…FAAV).

It localises to the cell membrane. This is an uncharacterized protein from Bacillus subtilis (strain 168).